The following is a 156-amino-acid chain: Small ribosomal subunit protein uS7 (156 aa).

The protein belongs to the universal ribosomal protein uS7 family. In terms of assembly, part of the 30S ribosomal subunit. Contacts proteins S9 and S11.

Its function is as follows. One of the primary rRNA binding proteins, it binds directly to 16S rRNA where it nucleates assembly of the head domain of the 30S subunit. Is located at the subunit interface close to the decoding center, probably blocks exit of the E-site tRNA. The protein is Small ribosomal subunit protein uS7 of Campylobacter jejuni subsp. jejuni serotype O:6 (strain 81116 / NCTC 11828).